The sequence spans 339 residues: Serpentine receptor class alpha-21 (339 aa).

Helical transmembrane passes span 30–50, 150–170, 199–219, 250–270, and 282–302; these read FNFL…WLAI, FIAV…FYIA, VRTV…YLSV, ILIV…NLLL, and VLVA…PLVI.

Belongs to the nematode receptor-like protein sra family.

The protein resides in the membrane. The sequence is that of Serpentine receptor class alpha-21 (sra-21) from Caenorhabditis elegans.